Reading from the N-terminus, the 314-residue chain is Glutathione synthetase (314 aa).

An ATP-grasp domain is found at 125–309 (KLFVMNFPQL…VAAKVWDTIE (185 aa)). 151-207 (RDKHGAVVMKPLHGHGGAAVFRVMPQDMNFGSLFDMFTVTFKEPWVIQQFIPEVKHG) lines the ATP pocket. Residues glutamate 280 and asparagine 282 each contribute to the Mg(2+) site.

It belongs to the prokaryotic GSH synthase family. Requires Mg(2+) as cofactor. The cofactor is Mn(2+).

It catalyses the reaction gamma-L-glutamyl-L-cysteine + glycine + ATP = glutathione + ADP + phosphate + H(+). Its pathway is sulfur metabolism; glutathione biosynthesis; glutathione from L-cysteine and L-glutamate: step 2/2. The polypeptide is Glutathione synthetase (Bradyrhizobium diazoefficiens (strain JCM 10833 / BCRC 13528 / IAM 13628 / NBRC 14792 / USDA 110)).